Reading from the N-terminus, the 446-residue chain is Exodeoxyribonuclease 7 large subunit (446 aa).

This sequence belongs to the XseA family. As to quaternary structure, heterooligomer composed of large and small subunits.

The protein localises to the cytoplasm. It catalyses the reaction Exonucleolytic cleavage in either 5'- to 3'- or 3'- to 5'-direction to yield nucleoside 5'-phosphates.. Its function is as follows. Bidirectionally degrades single-stranded DNA into large acid-insoluble oligonucleotides, which are then degraded further into small acid-soluble oligonucleotides. The sequence is that of Exodeoxyribonuclease 7 large subunit from Streptococcus pneumoniae (strain Hungary19A-6).